The chain runs to 309 residues: Ribonuclease Z (309 aa).

H63, H65, D67, H68, H145, D216, and H274 together coordinate Zn(2+). Catalysis depends on D67, which acts as the Proton acceptor.

Belongs to the RNase Z family. In terms of assembly, homodimer. Zn(2+) is required as a cofactor.

The catalysed reaction is Endonucleolytic cleavage of RNA, removing extra 3' nucleotides from tRNA precursor, generating 3' termini of tRNAs. A 3'-hydroxy group is left at the tRNA terminus and a 5'-phosphoryl group is left at the trailer molecule.. In terms of biological role, zinc phosphodiesterase, which displays some tRNA 3'-processing endonuclease activity. Probably involved in tRNA maturation, by removing a 3'-trailer from precursor tRNA. This chain is Ribonuclease Z, found in Streptococcus gordonii (strain Challis / ATCC 35105 / BCRC 15272 / CH1 / DL1 / V288).